The sequence spans 348 residues: Phosphoribosylformylglycinamidine cyclo-ligase (348 aa).

The protein belongs to the AIR synthase family.

It is found in the cytoplasm. It catalyses the reaction 2-formamido-N(1)-(5-O-phospho-beta-D-ribosyl)acetamidine + ATP = 5-amino-1-(5-phospho-beta-D-ribosyl)imidazole + ADP + phosphate + H(+). It functions in the pathway purine metabolism; IMP biosynthesis via de novo pathway; 5-amino-1-(5-phospho-D-ribosyl)imidazole from N(2)-formyl-N(1)-(5-phospho-D-ribosyl)glycinamide: step 2/2. This chain is Phosphoribosylformylglycinamidine cyclo-ligase, found in Geobacter sp. (strain M21).